A 290-amino-acid chain; its full sequence is ATP synthase gamma chain (290 aa).

The protein belongs to the ATPase gamma chain family. In terms of assembly, F-type ATPases have 2 components, CF(1) - the catalytic core - and CF(0) - the membrane proton channel. CF(1) has five subunits: alpha(3), beta(3), gamma(1), delta(1), epsilon(1). CF(0) has three main subunits: a, b and c.

The protein localises to the cell membrane. Its function is as follows. Produces ATP from ADP in the presence of a proton gradient across the membrane. The gamma chain is believed to be important in regulating ATPase activity and the flow of protons through the CF(0) complex. The polypeptide is ATP synthase gamma chain (Buchnera aphidicola subsp. Diuraphis noxia).